The following is a 331-amino-acid chain: D-lactate dehydrogenase (331 aa).

NAD(+) contacts are provided by residues 155–156 (HI), Asp175, 206–207 (VP), Asn212, 233–235 (AAR), and Asp259. Arg235 is an active-site residue. The active site involves Glu264. His296 serves as the catalytic Proton donor.

Belongs to the D-isomer specific 2-hydroxyacid dehydrogenase family. As to quaternary structure, homodimer.

The catalysed reaction is (R)-lactate + NAD(+) = pyruvate + NADH + H(+). In Leuconostoc mesenteroides subsp. cremoris, this protein is D-lactate dehydrogenase.